A 293-amino-acid polypeptide reads, in one-letter code: Ribonuclease HIII (293 aa).

An RNase H type-2 domain is found at 78–293 (LPLIGTDEVG…TEKAKKRLER (216 aa)). A divalent metal cation contacts are provided by Asp-84, Glu-85, and Asp-187.

The protein belongs to the RNase HII family. RnhC subfamily. The cofactor is Mn(2+). Mg(2+) is required as a cofactor.

The protein localises to the cytoplasm. It catalyses the reaction Endonucleolytic cleavage to 5'-phosphomonoester.. Endonuclease that specifically degrades the RNA of RNA-DNA hybrids. This Streptococcus pneumoniae (strain Taiwan19F-14) protein is Ribonuclease HIII.